A 181-amino-acid polypeptide reads, in one-letter code: Protein GrpE (181 aa).

Polar residues predominate over residues 1–13 (MENTQENPATQSA). Positions 1–34 (MENTQENPATQSAEDIGSAKQAAQGAAPAAEAAD) are disordered. Residues 19–34 (AKQAAQGAAPAAEAAD) show a composition bias toward low complexity.

Belongs to the GrpE family. In terms of assembly, homodimer.

It is found in the cytoplasm. Its function is as follows. Participates actively in the response to hyperosmotic and heat shock by preventing the aggregation of stress-denatured proteins, in association with DnaK and GrpE. It is the nucleotide exchange factor for DnaK and may function as a thermosensor. Unfolded proteins bind initially to DnaJ; upon interaction with the DnaJ-bound protein, DnaK hydrolyzes its bound ATP, resulting in the formation of a stable complex. GrpE releases ADP from DnaK; ATP binding to DnaK triggers the release of the substrate protein, thus completing the reaction cycle. Several rounds of ATP-dependent interactions between DnaJ, DnaK and GrpE are required for fully efficient folding. The chain is Protein GrpE from Burkholderia vietnamiensis (strain G4 / LMG 22486) (Burkholderia cepacia (strain R1808)).